The primary structure comprises 465 residues: DEAD-box ATP-dependent RNA helicase 55 (465 aa).

Residues Phe17–Ala45 carry the Q motif motif. In terms of domain architecture, Helicase ATP-binding spans Ile48–Lys219. Ala61–Thr68 contacts ATP. Residues Asp167–Asp170 carry the DEAD box motif. Positions Gln228–Gly422 constitute a Helicase C-terminal domain. The segment at Lys413 to Leu465 is disordered. Over residues Ser428–Lys437 the composition is skewed to basic and acidic residues. The span at Gln456–Leu465 shows a compositional bias: acidic residues.

The protein belongs to the DEAD box helicase family. DDX55/SPB4 subfamily.

It catalyses the reaction ATP + H2O = ADP + phosphate + H(+). In Arabidopsis thaliana (Mouse-ear cress), this protein is DEAD-box ATP-dependent RNA helicase 55 (RH55).